The sequence spans 268 residues: Mitochondrial distribution and morphology protein 12 (268 aa).

One can recognise an SMP-LTD domain in the interval 1 to 266 (MSIDLEWCKL…FPNFHTIVMA (266 aa)). The disordered stretch occupies residues 66–136 (EDDEEGSDRG…PPPAENPHPN (71 aa)). A compositionally biased stretch (polar residues) spans 102–111 (PATNVTSSLD). Residues 112-121 (TRSDQPDDQK) are compositionally biased toward basic and acidic residues.

The protein belongs to the MDM12 family. As to quaternary structure, component of the ER-mitochondria encounter structure (ERMES) or MDM complex, composed of MMM1, MDM10, MDM12 and MDM34. An MMM1 homodimer associates with one molecule of MDM12 on each side in a pairwise head-to-tail manner, and the SMP-LTD domains of MMM1 and MDM12 generate a continuous hydrophobic tunnel for phospholipid trafficking.

The protein resides in the mitochondrion outer membrane. Its subcellular location is the endoplasmic reticulum membrane. Component of the ERMES/MDM complex, which serves as a molecular tether to connect the endoplasmic reticulum (ER) and mitochondria. Components of this complex are involved in the control of mitochondrial shape and protein biogenesis, and function in nonvesicular lipid trafficking between the ER and mitochondria. MDM12 is required for the interaction of the ER-resident membrane protein MMM1 and the outer mitochondrial membrane-resident beta-barrel protein MDM10. The MDM12-MMM1 subcomplex functions in the major beta-barrel assembly pathway that is responsible for biogenesis of all mitochondrial outer membrane beta-barrel proteins, and acts in a late step after the SAM complex. The MDM10-MDM12-MMM1 subcomplex further acts in the TOM40-specific pathway after the action of the MDM12-MMM1 complex. Essential for establishing and maintaining the structure of mitochondria and maintenance of mtDNA nucleoids. In Laccaria bicolor (strain S238N-H82 / ATCC MYA-4686) (Bicoloured deceiver), this protein is Mitochondrial distribution and morphology protein 12.